The chain runs to 779 residues: Probable ATP-dependent RNA helicase DHX40 (779 aa).

A disordered region spans residues 1-53; sequence MSRFPAVAGRAPRRQEEGERPVELQEERPSAVRIADREEKGCTSQEGGTTPTF. Positions 13-41 are enriched in basic and acidic residues; that stretch reads RRQEEGERPVELQEERPSAVRIADREEKG. Residues 42 to 53 are compositionally biased toward polar residues; it reads CTSQEGGTTPTF. Residues 63–231 form the Helicase ATP-binding domain; sequence IQAVRDNSFL…FGNCPIFDIP (169 aa). Residue 76-83 participates in ATP binding; it reads GNTGSGKT. The DEAH box motif lies at 173 to 176; it reads DEAH. The Helicase C-terminal domain occupies 263-442; it reads TMDIHLNEMA…SVVLTLKCLA (180 aa).

It belongs to the DEAD box helicase family. DEAH subfamily.

It catalyses the reaction ATP + H2O = ADP + phosphate + H(+). Probable ATP-dependent RNA helicase. The protein is Probable ATP-dependent RNA helicase DHX40 (Dhx40) of Rattus norvegicus (Rat).